Here is a 262-residue protein sequence, read N- to C-terminus: Zinc import ATP-binding protein ZnuC (262 aa).

Residues 6–221 form the ABC transporter domain; that stretch reads IRLDKVAVTL…PAFVELFGKN (216 aa). Residue 38–45 participates in ATP binding; the sequence is GPNGAGKT.

The protein belongs to the ABC transporter superfamily. Zinc importer (TC 3.A.1.15.5) family. The complex is composed of two ATP-binding proteins (ZnuC), two transmembrane proteins (ZnuB) and a solute-binding protein (ZnuA).

Its subcellular location is the cell inner membrane. It catalyses the reaction Zn(2+)(out) + ATP(in) + H2O(in) = Zn(2+)(in) + ADP(in) + phosphate(in) + H(+)(in). Part of the ABC transporter complex ZnuABC involved in zinc import. Responsible for energy coupling to the transport system. The polypeptide is Zinc import ATP-binding protein ZnuC (Pseudomonas syringae pv. syringae (strain B728a)).